The chain runs to 77 residues: Acyl carrier protein (77 aa).

In terms of domain architecture, Carrier spans 2–77 (STIEERVKKV…EAIDYVVAHQ (76 aa)). Ser37 carries the O-(pantetheine 4'-phosphoryl)serine modification.

This sequence belongs to the acyl carrier protein (ACP) family. Post-translationally, 4'-phosphopantetheine is transferred from CoA to a specific serine of apo-ACP by AcpS. This modification is essential for activity because fatty acids are bound in thioester linkage to the sulfhydryl of the prosthetic group.

Its subcellular location is the cytoplasm. It participates in lipid metabolism; fatty acid biosynthesis. In terms of biological role, carrier of the growing fatty acid chain in fatty acid biosynthesis. The sequence is that of Acyl carrier protein from Chromohalobacter salexigens (strain ATCC BAA-138 / DSM 3043 / CIP 106854 / NCIMB 13768 / 1H11).